Consider the following 524-residue polypeptide: Dihydromonacolin L monooxygenase mokC (524 aa).

The Cytoplasmic portion of the chain corresponds to 1-25 (MTVPTDTVSRRLQSLAWSDIKQHAP). A helical; Signal-anchor for type II membrane protein transmembrane segment spans residues 26–47 (WLPSSRTLVSGFLCLILLQILY). The Lumenal portion of the chain corresponds to 48–524 (SRGRKSDLRV…LMMRRRDEDL (477 aa)). N-linked (GlcNAc...) asparagine glycans are attached at residues asparagine 396 and asparagine 401. Position 467 (cysteine 467) interacts with heme.

The protein belongs to the cytochrome P450 family. It depends on heme as a cofactor.

Its subcellular location is the endoplasmic reticulum membrane. The enzyme catalyses dihydromonacolin L carboxylate + reduced [NADPH--hemoprotein reductase] + O2 = monacolin L carboxylate + oxidized [NADPH--hemoprotein reductase] + 2 H2O + H(+). The catalysed reaction is monacolin L carboxylate + reduced [NADPH--hemoprotein reductase] + O2 = monacolin J carboxylate + oxidized [NADPH--hemoprotein reductase] + H2O + H(+). It functions in the pathway polyketide biosynthesis; lovastatin biosynthesis. In terms of biological role, cytochrome P450 monooxygenase; part of the gene cluster that mediates the biosynthesis of monakolin K, also known as lovastatin, and which acts as a potent competitive inhibitor of HMG-CoA reductase. Monakolin K biosynthesis is performed in two stages. The first stage is catalyzed by the nonaketide synthase mokA, which belongs to type I polyketide synthases and catalyzes the iterative nine-step formation of the polyketide. This PKS stage is completed by the action of dehydrogenase mokE, which catalyzes the NADPH-dependent reduction of the unsaturated tetra-, penta- and heptaketide intermediates that arise during the mokA-mediated biosynthesis of the nonaketide chain and leads to dihydromonacolin L. Covalently bound dihydromonacolin L is released from mokA by the mokD esterase. Conversion of dihydromonacolin L into monacolin L and then monacolin J is subsequently performed with the participation of molecular oxygen and P450 monoogygenase mokC. Finally, mokF performs the conversion of monacoline J to monacoline K through the addition of the side-chain diketide moiety (2R)-2-methylbutanoate produced by the diketide synthase mokB. The protein is Dihydromonacolin L monooxygenase mokC of Monascus pilosus (Red mold).